A 417-amino-acid polypeptide reads, in one-letter code: Xylulose 5-phosphate/phosphate translocator, chloroplastic (417 aa).

A chloroplast-targeting transit peptide spans 1-82 (MISLNLSPSL…GFSRKPRSIA (82 aa)). The tract at residues 66-102 (TNPESSSGFSRKPRSIAAVGSSDSNPDEKSDLGEAEK) is disordered. At alanine 83 the chain carries N-acetylalanine. Positions 91–102 (PDEKSDLGEAEK) are enriched in basic and acidic residues. 9 helical membrane-spanning segments follow: residues 109–129 (TLQLGIVFGLWYFQNIVFNIF), 141–161 (WLLASFQLFAGSIWMLVLWSF), 173–193 (FIIALLGPALFHTIGHISACV), 198–218 (VAVSFTHVIKSAEPVFSVIFS), 225–245 (YPLAVWLSILPIVMGCSLAAV), 247–267 (EVSFNLGGLSGAMISNVGFVL), 287–307 (LYGCISILSLLYLFPVAIFVE), 318–338 (AIASVGTPSTFYFWVLLSGVF), and 384–404 (LNALGSAIAIFGTFLYSQATA). One can recognise an EamA domain in the interval 127–243 (NIFNKKALNV…LPIVMGCSLA (117 aa)).

Belongs to the TPT transporter family. TPT (TC 2.A.7.9) subfamily. Widely expressed.

It localises to the plastid. Its subcellular location is the chloroplast membrane. Its function is as follows. Sugar phosphate/phosphate translocator that transports inorganic phosphate, triose phosphate, 3-phosphoglycerate, xylulose 5-phosphate (Xul-5-P) and to a lesser extent ribulose 5-phosphate. Does not transport ribose 5-phosphate or hexose phosphates. Provides cytosolic Xul-5-P to the chloroplast, where it is used as an intermediate in the plastidic pentose phosphate pathways. This is Xylulose 5-phosphate/phosphate translocator, chloroplastic (XPT) from Arabidopsis thaliana (Mouse-ear cress).